Reading from the N-terminus, the 338-residue chain is Oligopeptide transport ATP-binding protein OppD (338 aa).

An ABC transporter domain is found at 7 to 257; that stretch reads LEAKQVSVAF…PKHPYTRSLL (251 aa). 43–50 is an ATP binding site; that stretch reads GESGSGKS.

Belongs to the ABC transporter superfamily. As to quaternary structure, the complex is composed of two ATP-binding proteins (OppD and OppF), two transmembrane proteins (OppB and OppC) and a solute-binding protein (OppA).

The protein localises to the cell membrane. The enzyme catalyses a [peptide](out) + ATP + H2O = a [peptide](in) + ADP + phosphate + H(+). Functionally, part of the ABC transporter complex OppABCDF involved in the uptake of oligopeptides. Probably responsible for energy coupling to the transport system. Essential for uptake of peptides larger than three amino acids and for growth in milk. This is Oligopeptide transport ATP-binding protein OppD from Lactococcus lactis subsp. cremoris (strain SK11).